The primary structure comprises 374 residues: Chorismate synthase (374 aa).

Residue Arg-55 coordinates NADP(+). FMN is bound by residues 132-134 (RGS), Gly-293, 308-312 (KPTPS), and Arg-335.

The protein belongs to the chorismate synthase family. It depends on FMNH2 as a cofactor.

It catalyses the reaction 5-O-(1-carboxyvinyl)-3-phosphoshikimate = chorismate + phosphate. It participates in metabolic intermediate biosynthesis; chorismate biosynthesis; chorismate from D-erythrose 4-phosphate and phosphoenolpyruvate: step 7/7. Its function is as follows. Catalyzes the anti-1,4-elimination of the C-3 phosphate and the C-6 proR hydrogen from 5-enolpyruvylshikimate-3-phosphate (EPSP) to yield chorismate, which is the branch point compound that serves as the starting substrate for the three terminal pathways of aromatic amino acid biosynthesis. This reaction introduces a second double bond into the aromatic ring system. This is Chorismate synthase from Methanothermobacter thermautotrophicus (strain ATCC 29096 / DSM 1053 / JCM 10044 / NBRC 100330 / Delta H) (Methanobacterium thermoautotrophicum).